Reading from the N-terminus, the 325-residue chain is Polyprenyl transferase mpaA (325 aa).

A run of 3 helical transmembrane segments spans residues 27 to 47 (MPYY…ALKL), 56 to 76 (VEYI…LCGA), and 108 to 128 (VEAL…LDLI). A glycan (N-linked (GlcNAc...) asparagine) is linked at Asn-131. Transmembrane regions (helical) follow at residues 134 to 151 (IWGL…YPYL), 159 to 179 (VFIY…ITGW), 192 to 212 (IFTH…YFNT), 240 to 260 (LFLA…VLKI), 262 to 282 (SPWL…MQIV), and 295 to 315 (IHWD…VEVG).

It belongs to the UbiA prenyltransferase family. It depends on Mg(2+) as a cofactor.

It is found in the golgi apparatus membrane. It catalyses the reaction 5,7-dihydroxy-4-methylphthalide + (2E,6E)-farnesyl diphosphate = 4-farnesyl-3,5-dihydroxy-6-methylphthalide + diphosphate. It participates in secondary metabolite biosynthesis; terpenoid biosynthesis. Its function is as follows. Polyprenyl transferase; part of the gene cluster that mediates the biosynthesis of mycophenolic acid (MPA), the first isolated antibiotic natural product in the world obtained from a culture of Penicillium brevicompactum in 1893. MpaA is a Golgi apparatus-associated enzyme that catalyzes the prenylation of 5,7-dihydroxy-4,6-dimethylphthalide (DHMP) to yield farnesyl-DHMP (FDHMP). The first step of the pathway is the synthesis of 5-methylorsellinic acid (5MOA) by the cytosolic polyketide synthase mpaC. 5MOA is then converted to the phthalide compound 5,7-dihydroxy-4,6-dimethylphthalide (DHMP) by the endoplasmic reticulum-bound cytochrome P450 monooxygenase mpaDE. MpaDE first catalyzes hydroxylation of 5-MOA to 4,6-dihydroxy-2-(hydroxymethyl)-3-methylbenzoic acid (DHMB). MpaDE then acts as a lactone synthase that catalyzes the ring closure to convert DHMB into DHMP. The next step is the prenylation of DHMP by the Golgi apparatus-associated prenyltransferase mpaA to yield farnesyl-DHMP (FDHMP). The ER-bound oxygenase mpaB then mediates the oxidative cleavage the C19-C20 double bond in FDHMP to yield FDHMP-3C via a mycophenolic aldehyde intermediate. The O-methyltransferase mpaG catalyzes the methylation of FDHMP-3C to yield MFDHMP-3C. After the cytosolic methylation of FDHMP-3C, MFDHMP-3C enters into peroxisomes probably via free diffusion due to its low molecular weight. Upon a peroxisomal CoA ligation reaction, catalyzed by a beta-oxidation component enzyme acyl-CoA ligase ACL891, MFDHMP-3C-CoA would then be restricted to peroxisomes for the following beta-oxidation pathway steps. The peroxisomal beta-oxidation machinery than converts MFDHMP-3C-CoA into MPA_CoA, via a beta-oxidation chain-shortening process. Finally mpaH acts as a peroxisomal acyl-CoA hydrolase with high substrate specificity toward MPA-CoA to release the final product MPA. The sequence is that of Polyprenyl transferase mpaA from Penicillium roqueforti (strain FM164).